Here is a 288-residue protein sequence, read N- to C-terminus: Protease HtpX homolog (288 aa).

2 helical membrane-spanning segments follow: residues 1–21 (MHTI…LLAG) and 23–43 (IIGG…MNFF). Histidine 130 contributes to the Zn(2+) binding site. The active site involves glutamate 131. Position 134 (histidine 134) interacts with Zn(2+). 2 helical membrane-spanning segments follow: residues 140-160 (ILIS…AEMA) and 175-195 (IGGL…AMII). Glutamate 204 contacts Zn(2+).

Belongs to the peptidase M48B family. Requires Zn(2+) as cofactor.

It localises to the cell inner membrane. In Persephonella marina (strain DSM 14350 / EX-H1), this protein is Protease HtpX homolog.